The sequence spans 521 residues: Cytochrome P450 1A1 (521 aa).

F229 contributes to the substrate binding site. C463 provides a ligand contact to heme.

It belongs to the cytochrome P450 family. Heme is required as a cofactor.

It localises to the endoplasmic reticulum membrane. The protein resides in the microsome membrane. The catalysed reaction is an organic molecule + reduced [NADPH--hemoprotein reductase] + O2 = an alcohol + oxidized [NADPH--hemoprotein reductase] + H2O + H(+). Cytochromes P450 are a group of heme-thiolate monooxygenases. They oxidize a variety of structurally unrelated compounds, including steroids, fatty acids, and xenobiotics. This is Cytochrome P450 1A1 (cyp1a1) from Chelon saliens (Leaping mullet).